The chain runs to 101 residues: Large ribosomal subunit protein P1 (101 aa).

The tract at residues Ala-65–Thr-89 is disordered. The span at Glu-73–Asp-87 shows a compositional bias: basic and acidic residues.

Belongs to the eukaryotic ribosomal protein P1/P2 family. In terms of assembly, part of the 50S ribosomal subunit. Homodimer, it forms part of the ribosomal stalk which helps the ribosome interact with GTP-bound translation factors. Forms a heptameric uL10/P0(P1)2(P1)2(P1)2 complex, where uL10/P0 forms an elongated spine to which the P1 dimers bind in a sequential fashion.

Functionally, forms part of the ribosomal stalk, playing a central role in the interaction of the ribosome with GTP-bound translation factors. The polypeptide is Large ribosomal subunit protein P1 (Methanothermococcus thermolithotrophicus (Methanococcus thermolithotrophicus)).